Consider the following 399-residue polypeptide: L-methionine gamma-lyase (399 aa).

Pyridoxal 5'-phosphate-binding positions include 59 to 61 (YTR) and 89 to 90 (GI). Tyr114 is a substrate binding site. A pyridoxal 5'-phosphate-binding site is contributed by 209 to 211 (SAT). An N6-(pyridoxal phosphate)lysine modification is found at Lys212. Position 376 (Arg376) interacts with substrate.

The protein belongs to the trans-sulfuration enzymes family. L-methionine gamma-lyase subfamily. In terms of assembly, homotetramer; dimer of active dimers. Pyridoxal 5'-phosphate is required as a cofactor.

The enzyme catalyses L-methionine + H2O = methanethiol + 2-oxobutanoate + NH4(+). The catalysed reaction is L-homocysteine + H2O = 2-oxobutanoate + hydrogen sulfide + NH4(+) + H(+). Its function is as follows. Catalyzes the alpha,gamma-elimination of L-methionine to produce methanethiol, 2-oxobutanoate and ammonia; methanethiol (methyl mercaptan) is considered to be one of the main causes of the oral malodor in periodontal disease and may also play a role in the pathogenicity of P.gingivalis in that disease. Is also able to catalyze the alpha,gamma-elimination of L-homocysteine. The sequence is that of L-methionine gamma-lyase from Porphyromonas gingivalis (strain ATCC BAA-308 / W83).